The primary structure comprises 224 residues: Ribonuclease T (224 aa).

Positions Val-32–Phe-206 constitute an Exonuclease domain. Mg(2+) is bound by residues Asp-35, Glu-37, His-193, and Asp-198. The active-site Proton donor/acceptor is the His-193.

Belongs to the RNase T family. As to quaternary structure, homodimer. The cofactor is Mg(2+).

In terms of biological role, trims short 3' overhangs of a variety of RNA species, leaving a one or two nucleotide 3' overhang. Responsible for the end-turnover of tRNA: specifically removes the terminal AMP residue from uncharged tRNA (tRNA-C-C-A). Also appears to be involved in tRNA biosynthesis. This chain is Ribonuclease T, found in Pseudomonas fluorescens (strain Pf0-1).